The primary structure comprises 159 residues: Large ribosomal subunit protein mL50 (159 aa).

It belongs to the mitochondrion-specific ribosomal protein mL50 family. In terms of assembly, component of the mitochondrial ribosome large subunit (39S) which comprises a 16S rRNA and about 50 distinct proteins.

It is found in the mitochondrion. The sequence is that of Large ribosomal subunit protein mL50 (MRPL50) from Bos taurus (Bovine).